We begin with the raw amino-acid sequence, 364 residues long: Biotin synthase (364 aa).

The Radical SAM core domain occupies 68-303 (CCGNTVDLCS…QQILRYAGGR (236 aa)). [4Fe-4S] cluster is bound by residues C86, C90, and C93. [2Fe-2S] cluster-binding residues include C131, C168, C228, and R298.

This sequence belongs to the radical SAM superfamily. Biotin synthase family. In terms of assembly, homodimer. The cofactor is [4Fe-4S] cluster. Requires [2Fe-2S] cluster as cofactor.

It carries out the reaction (4R,5S)-dethiobiotin + (sulfur carrier)-SH + 2 reduced [2Fe-2S]-[ferredoxin] + 2 S-adenosyl-L-methionine = (sulfur carrier)-H + biotin + 2 5'-deoxyadenosine + 2 L-methionine + 2 oxidized [2Fe-2S]-[ferredoxin]. It functions in the pathway cofactor biosynthesis; biotin biosynthesis; biotin from 7,8-diaminononanoate: step 2/2. Its function is as follows. Catalyzes the conversion of dethiobiotin (DTB) to biotin by the insertion of a sulfur atom into dethiobiotin via a radical-based mechanism. This is Biotin synthase from Microcystis aeruginosa (strain NIES-843 / IAM M-2473).